We begin with the raw amino-acid sequence, 394 residues long: Probable peptidoglycan glycosyltransferase FtsW (394 aa).

The Cytoplasmic segment spans residues 1 to 27 (MEFLQNIKKNYDEWTRITPQGLLYDRA). Residues 28 to 48 (LFWLFVILLLIGLVAVTSASI) traverse the membrane as a helical segment. Residues 49–66 (PYSSRLFNDPFYFAKRDA) lie on the Periplasmic side of the membrane. Residues 67–87 (IYVLLSLLTCYISLQISSSQW) traverse the membrane as a helical segment. The Cytoplasmic segment spans residues 88 to 93 (EKWHAK). A helical transmembrane segment spans residues 94 to 114 (IFLFSVILLLLVPFIGTSVNG). Residues 115-120 (AKRWIS) lie on the Periplasmic side of the membrane. The helical transmembrane segment at 121–141 (LGILNFQPAEFAKLALTCFLA) threads the bilayer. The Cytoplasmic segment spans residues 142-155 (SYFTRRYDEVRSRH). The next 2 membrane-spanning stretches (helical) occupy residues 156–176 (VSIFKPFIVMLVLGCFLLLQP) and 177–197 (DLGSTVVLFIIMSGMLFIVGA). Lys198 is a topological domain (cytoplasmic). The helical transmembrane segment at 199–219 (ILQFVGLIALGGILFVWLVLT) threads the bilayer. The Periplasmic portion of the chain corresponds to 220 to 277 (ASYRLKRFIGFLEPFKEPYGTGFQLTNSLIAFGRGEITGEGLGNSIQKLDYLPEAHTD). A helical membrane pass occupies residues 278 to 298 (FIMAIIGEEFGFIGILIVILL). The Cytoplasmic portion of the chain corresponds to 299 to 322 (LGLLIFRAMKIGRESLMLEQRFRG). Residues 323 to 343 (FFALGIGFWIFFQGFVNLGMA) form a helical membrane-spanning segment. Residues 344 to 353 (LGMLPTKGLT) are Periplasmic-facing. The chain crosses the membrane as a helical span at residues 354 to 374 (FPLVSYGGSSIIIMSATIGIL). Residues 375 to 394 (LRIDHENRLFRIGQARLRDD) lie on the Cytoplasmic side of the membrane.

This sequence belongs to the SEDS family. FtsW subfamily.

It is found in the cell inner membrane. It catalyses the reaction [GlcNAc-(1-&gt;4)-Mur2Ac(oyl-L-Ala-gamma-D-Glu-L-Lys-D-Ala-D-Ala)](n)-di-trans,octa-cis-undecaprenyl diphosphate + beta-D-GlcNAc-(1-&gt;4)-Mur2Ac(oyl-L-Ala-gamma-D-Glu-L-Lys-D-Ala-D-Ala)-di-trans,octa-cis-undecaprenyl diphosphate = [GlcNAc-(1-&gt;4)-Mur2Ac(oyl-L-Ala-gamma-D-Glu-L-Lys-D-Ala-D-Ala)](n+1)-di-trans,octa-cis-undecaprenyl diphosphate + di-trans,octa-cis-undecaprenyl diphosphate + H(+). It participates in cell wall biogenesis; peptidoglycan biosynthesis. Functionally, peptidoglycan polymerase that is essential for cell division. This chain is Probable peptidoglycan glycosyltransferase FtsW, found in Haemophilus influenzae (strain ATCC 51907 / DSM 11121 / KW20 / Rd).